A 241-amino-acid chain; its full sequence is General transcription factor IIF subunit 2 (241 aa).

It belongs to the TFIIF beta subunit family. As to quaternary structure, heterodimer of an alpha and a beta subunit.

It is found in the nucleus. TFIIF is a general transcription initiation factor that binds to RNA polymerase II and helps to recruit it to the initiation complex in collaboration with TFIIB. In Dictyostelium discoideum (Social amoeba), this protein is General transcription factor IIF subunit 2 (gtf2f2).